Consider the following 204-residue polypeptide: Probable nicotinate-nucleotide adenylyltransferase (204 aa).

The protein belongs to the NadD family.

The catalysed reaction is nicotinate beta-D-ribonucleotide + ATP + H(+) = deamido-NAD(+) + diphosphate. Its pathway is cofactor biosynthesis; NAD(+) biosynthesis; deamido-NAD(+) from nicotinate D-ribonucleotide: step 1/1. Functionally, catalyzes the reversible adenylation of nicotinate mononucleotide (NaMN) to nicotinic acid adenine dinucleotide (NaAD). The sequence is that of Probable nicotinate-nucleotide adenylyltransferase from Dehalococcoides mccartyi (strain ATCC BAA-2100 / JCM 16839 / KCTC 5957 / BAV1).